Here is a 210-residue protein sequence, read N- to C-terminus: Orotate phosphoribosyltransferase (210 aa).

5-phospho-alpha-D-ribose 1-diphosphate-binding positions include R94, K98, H100, and 120-128 (EDLISTGGS). S124 is an orotate binding site.

It belongs to the purine/pyrimidine phosphoribosyltransferase family. PyrE subfamily. As to quaternary structure, homodimer. The cofactor is Mg(2+).

It carries out the reaction orotidine 5'-phosphate + diphosphate = orotate + 5-phospho-alpha-D-ribose 1-diphosphate. The protein operates within pyrimidine metabolism; UMP biosynthesis via de novo pathway; UMP from orotate: step 1/2. In terms of biological role, catalyzes the transfer of a ribosyl phosphate group from 5-phosphoribose 1-diphosphate to orotate, leading to the formation of orotidine monophosphate (OMP). The sequence is that of Orotate phosphoribosyltransferase from Bacillus cereus (strain B4264).